Here is a 555-residue protein sequence, read N- to C-terminus: Carboxylic ester hydrolase (555 aa).

The signal sequence occupies residues 1 to 19 (MELSVIALLLLGFVNFSWQ). C86 and C107 are oxidised to a cystine. N-linked (GlcNAc...) asparagine glycans are attached at residues N120 and N144. The Acyl-ester intermediate role is filled by S211. A disulfide bridge links C263 with C274. The Charge relay system role is filled by E336. 2 N-linked (GlcNAc...) asparagine glycosylation sites follow: N369 and N397. H459 serves as the catalytic Charge relay system. N-linked (GlcNAc...) asparagine glycosylation is found at N473 and N533.

This sequence belongs to the type-B carboxylesterase/lipase family. Post-translationally, N-glycosylated. In terms of tissue distribution, expressed in several tissues, including epidermis (at protein level), fat body (at protein level), gut (at protein level), muscle (at protein level), and venom gland (at protein level).

The protein resides in the secreted. The enzyme catalyses a carboxylic ester + H2O = an alcohol + a carboxylate + H(+). Its function is as follows. Lipolytic agent that may be involved in distributing the venom via degradation of blood triglycerides. The recombinant protein degrades triglycerides and exhibits high lipolytic activity toward long-chain triglycerides (tested on tributyrin, trioctanoin and triolein). Does not affect mammalian cells. The protein is Carboxylic ester hydrolase (vCaE) of Bombus ignitus (Bumblebee).